A 201-amino-acid polypeptide reads, in one-letter code: 3-isopropylmalate dehydratase small subunit (201 aa).

The protein belongs to the LeuD family. LeuD type 1 subfamily. In terms of assembly, heterodimer of LeuC and LeuD.

The enzyme catalyses (2R,3S)-3-isopropylmalate = (2S)-2-isopropylmalate. Its pathway is amino-acid biosynthesis; L-leucine biosynthesis; L-leucine from 3-methyl-2-oxobutanoate: step 2/4. Its function is as follows. Catalyzes the isomerization between 2-isopropylmalate and 3-isopropylmalate, via the formation of 2-isopropylmaleate. The chain is 3-isopropylmalate dehydratase small subunit from Enterobacter sp. (strain 638).